Reading from the N-terminus, the 2690-residue chain is Non-reducing polyketide synthase pigA (2690 aa).

The Starter acyltransferase (SAT) domain maps to Asn96–Phe211. The Nucleophile; for transacylase activity role is filled by Cys140. The active-site Proton donor/acceptor; for transacylase activity is the His258. A Ketosynthase family 3 (KS3) domain is found at Glu388–Gln804. Residues Cys553, His688, and His727 each act as for beta-ketoacyl synthase activity in the active site. The Malonyl-CoA:ACP transacylase (MAT) domain maps to Phe915–Ser1182. An N-terminal hotdog fold region spans residues Leu1296–Asp1426. Residues Leu1296–Ser1602 enclose the PKS/mFAS DH domain. The segment at Leu1323–Ser1600 is product template (PT) domain. His1327 functions as the Proton acceptor; for dehydratase activity in the catalytic mechanism. The interval Ala1454 to Ser1602 is C-terminal hotdog fold. Asp1510 acts as the Proton donor; for dehydratase activity in catalysis. In terms of domain architecture, Carrier 1 spans Pro1657 to Leu1731. Residue Ser1691 is modified to O-(pantetheine 4'-phosphoryl)serine. Residues Leu1731–Ala1764 are disordered. Residues Gly1736–Ser1751 show a composition bias toward acidic residues. Residues Pro1755–Ala1764 show a composition bias toward polar residues. A Carrier 2 domain is found at Ser1768–Ser1842. Ser1802 carries the post-translational modification O-(pantetheine 4'-phosphoryl)serine. Positions Gln1948–Ala2255 are methyltransferase domain. A Thioester reductase (TE) domain is found at Val2320–Ala2564.

Pantetheine 4'-phosphate serves as cofactor.

Its pathway is secondary metabolite biosynthesis. Non-reducing polyketide synthase; part of the gene cluster that mediates the biosynthesis of azaphilone pigments (MonAzPs), a complex mixture of compounds with a common azaphilone skeleton very widely used as food colorants. PigA catalyzes the first step of MonAzPs biosynthesis and forms the hexaketide precursor from successive condensations of five malonyl-CoA units, with a simple acetyl-CoA starter unit. The starter acyl transferase (SAT) domain of pigA selects an acetyl-CoA starter unit, and the ketoacyl synthase (KS)-acyl transferase (AT)-acyl carrier protein (ACP) domains extend this starter unit five times with malonyl-CoA in five successive decarboxylative Claisen condensation cycles. The methyltransferase (MT) domain conducts a single C-methylation at C-4, most likely at the pentaketide stage. The reactive hexaketide chain then undergoes a product template (PT) domain-mediated C-2 to C-7 aldol cyclization to afford the first aromatic ring, followed by reductive release of the first pathway intermediate by the NADPH-dependent reductive release (R) domain. The role of esterase pigG is not clear, but it may play at most a supplementary role in the formation of the benzaldehyde produced by the pigA nrPKS. This very reactive benzaldehyde is intercepted by the pigC ketoreductase that to provide the first stable enzyme-free MonAzPs intermediate, 6-(4-hydroxy-2-oxopentyl)-3-methyl-2,4-dioxocyclohexane carbaldehyde, also known as M7PKS-1. The FAD-dependent monooxygenase pigN hydroxylates M7PKS-1 at C-4, which triggers the formation of the pyran ring. PigJ, pigK and pigD are involved in the acetylation of the pyran ring. PigJ and pigK form the two subunits of a dedicated fungal FAS that produces the side chain fatty acyl moiety of MonAzPs and pigD transfers the fatty acyl chain to the C-4 alcohol. PigM and pigO are involved in the elimination of the omega-1 alcohol. PigM acts as an O-acetyltransferase that synthesizes the putative O-11 acetyl intermediate whereas pigO eliminates acetic acid to yield an intermediate with a C10(11) double bond. The dehydration of the C-11 alcohol followed by the reduction of the C6(7) double bond by the NAD(P)H-dependent oxidoreductase pigE increases the electrophilicity of the C-5 ketone of the resulting acyl benzopyran. This in turn sets up the C-5 ketone for an intramolecular Knoevenagel aldol condensation with the C-20 enol of the side chain. This condensation affords the characteristic linear tricyclic carbon skeletons of the yellow pigments that serve as the common precursors for the classical yellow pigments monascin and ankaflavin, orange pigments rubopunctatin and monascorubrin, and red pigments ribropunctamine and monascorubramine. The FAD-dependent oxidoreductase pigF is especially invoved in the biosynthesis of orange and red pigments via desaturation of C6(7). The protein is Non-reducing polyketide synthase pigA of Monascus ruber (Mold).